A 33-amino-acid chain; its full sequence is Toxin BcV (33 aa).

A disulfide bridge connects residues Cys6 and Cys30.

The protein localises to the secreted. The protein resides in the nematocyst. Functionally, potently and reversibly blocks mammalian Kv11/KCNH/ERG voltage-gated potassium channels. Acts as a gating-modifier toxin that shifts the voltage-dependence of ERG activation in the positive direction and suppresses its current amplitudes elicited by strong depolarizing pulses that maximally activate the channels. The protein is Toxin BcV of Bunodosoma caissarum (Sea anemone).